A 152-amino-acid chain; its full sequence is Xanthine-guanine phosphoribosyltransferase (152 aa).

5-phospho-alpha-D-ribose 1-diphosphate is bound by residues 37-38 (RG), arginine 69, and 88-96 (DDLVDTGGT). Arginine 69 contributes to the GMP binding site. Aspartate 89 is a Mg(2+) binding site. 2 residues coordinate guanine: aspartate 92 and isoleucine 135. Xanthine is bound by residues aspartate 92 and isoleucine 135. Residues 92-96 (DTGGT) and 134-135 (WI) contribute to the GMP site.

The protein belongs to the purine/pyrimidine phosphoribosyltransferase family. XGPT subfamily. In terms of assembly, homotetramer. Mg(2+) is required as a cofactor.

It localises to the cell inner membrane. It catalyses the reaction GMP + diphosphate = guanine + 5-phospho-alpha-D-ribose 1-diphosphate. The enzyme catalyses XMP + diphosphate = xanthine + 5-phospho-alpha-D-ribose 1-diphosphate. The catalysed reaction is IMP + diphosphate = hypoxanthine + 5-phospho-alpha-D-ribose 1-diphosphate. It functions in the pathway purine metabolism; GMP biosynthesis via salvage pathway; GMP from guanine: step 1/1. It participates in purine metabolism; XMP biosynthesis via salvage pathway; XMP from xanthine: step 1/1. Functionally, purine salvage pathway enzyme that catalyzes the transfer of the ribosyl-5-phosphate group from 5-phospho-alpha-D-ribose 1-diphosphate (PRPP) to the N9 position of the 6-oxopurines guanine and xanthine to form the corresponding ribonucleotides GMP (guanosine 5'-monophosphate) and XMP (xanthosine 5'-monophosphate), with the release of PPi. To a lesser extent, also acts on hypoxanthine. The protein is Xanthine-guanine phosphoribosyltransferase of Erwinia tasmaniensis (strain DSM 17950 / CFBP 7177 / CIP 109463 / NCPPB 4357 / Et1/99).